A 596-amino-acid polypeptide reads, in one-letter code: Serine/threonine-protein kinase PknH (596 aa).

The Cytoplasmic portion of the chain corresponds to 1–373 (MSDAQDSRVG…QTPRKTNPWP (373 aa)). A Protein kinase domain is found at 16–276 (YHLKRLLGRG…DLALAAHEAL (261 aa)). ATP contacts are provided by residues 22-30 (LGRGGMGEV) and lysine 45. Aspartate 139 acts as the Proton acceptor in catalysis. At threonine 170 the chain carries Phosphothreonine. The interval 292–368 (QESTLPGTAA…PSPWAQTPRK (77 aa)) is disordered. Over residues 307 to 318 (PTMPTVTPPPIQ) the composition is skewed to pro residues. The chain crosses the membrane as a helical span at residues 374-394 (LVAGAAAVVLVLVLGAIGIWI). The Extracellular segment spans residues 395–596 (ANRPKPVQPP…AKIVDKVNKE (202 aa)).

Belongs to the protein kinase superfamily. Ser/Thr protein kinase family. In terms of processing, autophosphorylated on threonine and serine residues.

It is found in the cell membrane. The enzyme catalyses L-seryl-[protein] + ATP = O-phospho-L-seryl-[protein] + ADP + H(+). It catalyses the reaction L-threonyl-[protein] + ATP = O-phospho-L-threonyl-[protein] + ADP + H(+). This Mycobacterium bovis (strain ATCC BAA-935 / AF2122/97) protein is Serine/threonine-protein kinase PknH (pknH).